We begin with the raw amino-acid sequence, 152 residues long: CASP-like protein 5B3 (152 aa).

Residues 1 to 21 lie on the Cytoplasmic side of the membrane; sequence MIDIPGTPGTLTGLVLRISQC. A run of 2 helical transmembrane segments spans residues 22 to 42 and 43 to 63; these read VFAA…SFTA and FCYL…LAIL. The Extracellular portion of the chain corresponds to 64–77; it reads DTFALVRKKTLLSP. A helical membrane pass occupies residues 78-98; the sequence is VLVSLFVVGDWVTSTLSLAGA. The Cytoplasmic portion of the chain corresponds to 99-127; the sequence is SSSAGITVLYFGDLGSCSFEAECWKYQLS. Residues 128–148 traverse the membrane as a helical segment; that stretch reads VALAFLCWITIAVSSLTTLWL. The Extracellular portion of the chain corresponds to 149–152; the sequence is LASA.

This sequence belongs to the Casparian strip membrane proteins (CASP) family. As to quaternary structure, homodimer and heterodimers. As to expression, expressed in the stele of the root and in leaves.

It localises to the cell membrane. This chain is CASP-like protein 5B3, found in Arabidopsis thaliana (Mouse-ear cress).